A 468-amino-acid chain; its full sequence is 6-phosphogluconate dehydrogenase, decarboxylating (468 aa).

NADP(+)-binding positions include 10-15 (GMAVMG), 33-35 (NRS), 74-76 (IKS), and N102. Residues N102 and 128–130 (SGG) each bind substrate. Residue K182 is the Proton acceptor of the active site. 185-186 (HN) contributes to the substrate binding site. E189 (proton donor) is an active-site residue. 5 residues coordinate substrate: Y190, K259, R286, R445, and H451.

Belongs to the 6-phosphogluconate dehydrogenase family. In terms of assembly, homodimer.

The enzyme catalyses 6-phospho-D-gluconate + NADP(+) = D-ribulose 5-phosphate + CO2 + NADPH. It participates in carbohydrate degradation; pentose phosphate pathway; D-ribulose 5-phosphate from D-glucose 6-phosphate (oxidative stage): step 3/3. In terms of biological role, catalyzes the oxidative decarboxylation of 6-phosphogluconate to ribulose 5-phosphate and CO(2), with concomitant reduction of NADP to NADPH. The sequence is that of 6-phosphogluconate dehydrogenase, decarboxylating (gnd) from Buchnera aphidicola subsp. Baizongia pistaciae (strain Bp).